Reading from the N-terminus, the 144-residue chain is Granulocyte-macrophage colony-stimulating factor (144 aa).

The N-terminal stretch at 1–17 (MWLQSLLLLGTVACSIS) is a signal peptide. Residues S22, S24, and S26 are each glycosylated (O-linked (GalNAc...) serine). T27 carries an O-linked (GalNAc...) threonine; partial glycan. N-linked (GlcNAc...) asparagine glycosylation is found at N44 and N54. Cystine bridges form between C71-C113 and C105-C138.

The protein belongs to the GM-CSF family. In terms of assembly, monomer. The signaling GM-CSF receptor complex is a dodecamer of two head-to-head hexamers of two alpha, two beta, and two ligand subunits.

The protein localises to the secreted. In terms of biological role, cytokine that stimulates the growth and differentiation of hematopoietic precursor cells from various lineages, including granulocytes, macrophages, eosinophils and erythrocytes. The polypeptide is Granulocyte-macrophage colony-stimulating factor (CSF2) (Homo sapiens (Human)).